Reading from the N-terminus, the 341-residue chain is Anthranilate phosphoribosyltransferase (341 aa).

Residues Gly79, 82-83, Thr87, 89-92, 107-115, and Ala119 contribute to the 5-phospho-alpha-D-ribose 1-diphosphate site; these read GD, NIST, and KHGNRAASS. Anthranilate is bound at residue Gly79. Ser91 contacts Mg(2+). Asn110 provides a ligand contact to anthranilate. Residue Arg165 participates in anthranilate binding. The Mg(2+) site is built by Asp224 and Glu225.

The protein belongs to the anthranilate phosphoribosyltransferase family. In terms of assembly, homodimer. The cofactor is Mg(2+).

The catalysed reaction is N-(5-phospho-beta-D-ribosyl)anthranilate + diphosphate = 5-phospho-alpha-D-ribose 1-diphosphate + anthranilate. It functions in the pathway amino-acid biosynthesis; L-tryptophan biosynthesis; L-tryptophan from chorismate: step 2/5. Its function is as follows. Catalyzes the transfer of the phosphoribosyl group of 5-phosphorylribose-1-pyrophosphate (PRPP) to anthranilate to yield N-(5'-phosphoribosyl)-anthranilate (PRA). This is Anthranilate phosphoribosyltransferase from Lacticaseibacillus casei (strain BL23) (Lactobacillus casei).